The primary structure comprises 363 residues: Aminomethyltransferase (363 aa).

This sequence belongs to the GcvT family. As to quaternary structure, the glycine cleavage system is composed of four proteins: P, T, L and H.

The catalysed reaction is N(6)-[(R)-S(8)-aminomethyldihydrolipoyl]-L-lysyl-[protein] + (6S)-5,6,7,8-tetrahydrofolate = N(6)-[(R)-dihydrolipoyl]-L-lysyl-[protein] + (6R)-5,10-methylene-5,6,7,8-tetrahydrofolate + NH4(+). Its function is as follows. The glycine cleavage system catalyzes the degradation of glycine. This Nitrosomonas eutropha (strain DSM 101675 / C91 / Nm57) protein is Aminomethyltransferase.